Consider the following 166-residue polypeptide: MSKVIETKQQVVTEIAEKLRASKSTIVVDYRGLTVSEATELRKNLREAGVEFKVYKNSLTRRAAESAEMAELNEFLTGPNAIAFSNEDVVAPAKVLNDFAKNHEALEIKAGVIEGKLVTLDEVKAIATLPSREGLLSMLLSVLQAPIRNLALATKAVADQKEEQGA.

This sequence belongs to the universal ribosomal protein uL10 family. Part of the ribosomal stalk of the 50S ribosomal subunit. The N-terminus interacts with L11 and the large rRNA to form the base of the stalk. The C-terminus forms an elongated spine to which L12 dimers bind in a sequential fashion forming a multimeric L10(L12)X complex.

In terms of biological role, forms part of the ribosomal stalk, playing a central role in the interaction of the ribosome with GTP-bound translation factors. This chain is Large ribosomal subunit protein uL10, found in Bacillus mycoides (strain KBAB4) (Bacillus weihenstephanensis).